The chain runs to 686 residues: Protein arginine N-methyltransferase 7 (686 aa).

SAM-dependent MTase PRMT-type domains follow at residues 5 to 352 (SDDY…FSWW) and 357 to 686 (DLSL…FKFD).

Belongs to the class I-like SAM-binding methyltransferase superfamily. Protein arginine N-methyltransferase family. PRMT7 subfamily.

In terms of biological role, essential arginine methyltransferase that can both catalyze the formation of omega-N monomethylarginine (MMA) and symmetrical dimethylarginine (sDMA). Specifically mediates the symmetrical dimethylation of arginine residues in the small nuclear ribonucleoproteins SmD1 and SmD3. This Aedes aegypti (Yellowfever mosquito) protein is Protein arginine N-methyltransferase 7 (Art7).